Consider the following 161-residue polypeptide: Large ribosomal subunit protein uL15 (161 aa).

Residues 1 to 43 (MKLSEISDNPGARKKRMRIGRGIGSGKGKTGGRGGKGQTARSG) are disordered. Residues 21-37 (RGIGSGKGKTGGRGGKG) show a composition bias toward gly residues.

Belongs to the universal ribosomal protein uL15 family. Part of the 50S ribosomal subunit.

In terms of biological role, binds to the 23S rRNA. This Rhodopseudomonas palustris (strain BisB5) protein is Large ribosomal subunit protein uL15.